A 410-amino-acid polypeptide reads, in one-letter code: Neurotensin receptor type 2 (410 aa).

The Extracellular segment spans residues 1–32 (METSSPRPPRPSSNPGLSLDARLGVDTRLWAK). The helical transmembrane segment at 33 to 55 (VLFTALYALIWALGAAGNALSAH) threads the bilayer. Residues 56–64 (VVLKARAGR) lie on the Cytoplasmic side of the membrane. The chain crosses the membrane as a helical span at residues 65-87 (AGRLRHHVLSLALAGLLLLLVGV). Topologically, residues 88 to 109 (PVELYSFVWFHYPWVFGDLGCR) are extracellular. A disulfide bridge connects residues C108 and C194. Residues 110–131 (GYYFVHELCAYATVLSVAGLSA) traverse the membrane as a helical segment. Over 132–154 (ERCLAVCQPLRARSLLTPRRTRW) the chain is Cytoplasmic. A helical transmembrane segment spans residues 155-176 (LVALSWAASLGLALPMAVIMGQ). The Extracellular segment spans residues 177–217 (KHELETADGEPEPASRVCTVLVSRTALQVFIQVNVLVSFVL). The helical transmembrane segment at 218 to 237 (PLALTAFLNGVTVSHLLALC) threads the bilayer. Over 238–297 (SQVPSTSTPGSSTPSRLELLSEEGLLSFIVWKKTFIQGGQVSLVRHKDVRRIRSLQRSVQ) the chain is Cytoplasmic. The helical transmembrane segment at 298-318 (VLRAIVVMYVICWLPYHARRL) threads the bilayer. Residues 319–337 (MYCYVPDDAWTDPLYNFYH) lie on the Extracellular side of the membrane. The helical transmembrane segment at 338–358 (YFYMVTNTLFYVSSAVTPLLY) threads the bilayer. The Cytoplasmic portion of the chain corresponds to 359–410 (NAVSSSFRKLFLEAVSSLCGEHHPMKRLPPKPQSPTLMDTASGFGDPPETRT). C377 is lipidated: S-palmitoyl cysteine. A disordered region spans residues 381–410 (HPMKRLPPKPQSPTLMDTASGFGDPPETRT).

The protein belongs to the G-protein coupled receptor 1 family. Neurotensin receptor subfamily. NTSR2 sub-subfamily. Expressed in prostate (at protein level).

It localises to the cell membrane. In terms of biological role, receptor for the tridecapeptide neurotensin. It is associated with G proteins that activate a phosphatidylinositol-calcium second messenger system. This is Neurotensin receptor type 2 (NTSR2) from Homo sapiens (Human).